The following is a 221-amino-acid chain: Mediator of RNA polymerase II transcription subunit 19a (221 aa).

The disordered stretch occupies residues 101–221 (PVELPPAEKG…DEVGAIRVAG (121 aa)). Basic residues predominate over residues 142 to 152 (EHKKHKHKHKD). Residues 153–178 (RSKDKDKDKDRDRKKDKNGHHDSGDH) are compositionally biased toward basic and acidic residues. A compositionally biased stretch (basic residues) spans 179–188 (SKKHHDKKRK).

The protein belongs to the plant Mediator complex subunit 19 family. Component of the Mediator complex. Interacts with FIB2.

Its subcellular location is the nucleus. In terms of biological role, component of the Mediator complex, a coactivator involved in the regulated transcription of nearly all RNA polymerase II-dependent genes. Mediator functions as a bridge to convey information from gene-specific regulatory proteins to the basal RNA polymerase II transcription machinery. The Mediator complex, having a compact conformation in its free form, is recruited to promoters by direct interactions with regulatory proteins and serves for the assembly of a functional preinitiation complex with RNA polymerase II and the general transcription factors. The chain is Mediator of RNA polymerase II transcription subunit 19a (MED19A) from Arabidopsis thaliana (Mouse-ear cress).